Reading from the N-terminus, the 620-residue chain is Methionine--tRNA ligase (620 aa).

The 'HIGH' region signature appears at 11–21; sequence PYANGPRHIGH. Residues cysteine 143, cysteine 146, cysteine 156, and cysteine 159 each contribute to the Zn(2+) site. The 'KMSKS' region signature appears at 347–351; sequence KFSSS. Serine 350 is a binding site for ATP.

The protein belongs to the class-I aminoacyl-tRNA synthetase family. MetG type 1 subfamily. In terms of assembly, monomer. It depends on Zn(2+) as a cofactor.

The protein localises to the cytoplasm. The enzyme catalyses tRNA(Met) + L-methionine + ATP = L-methionyl-tRNA(Met) + AMP + diphosphate. Is required not only for elongation of protein synthesis but also for the initiation of all mRNA translation through initiator tRNA(fMet) aminoacylation. The chain is Methionine--tRNA ligase from Bifidobacterium adolescentis (strain ATCC 15703 / DSM 20083 / NCTC 11814 / E194a).